Consider the following 331-residue polypeptide: Pantothenate kinase (331 aa).

ATP is bound at residue 109–116 (GSVAVGKS).

It belongs to the prokaryotic pantothenate kinase family.

The protein localises to the cytoplasm. The catalysed reaction is (R)-pantothenate + ATP = (R)-4'-phosphopantothenate + ADP + H(+). The protein operates within cofactor biosynthesis; coenzyme A biosynthesis; CoA from (R)-pantothenate: step 1/5. In Rhizobium johnstonii (strain DSM 114642 / LMG 32736 / 3841) (Rhizobium leguminosarum bv. viciae), this protein is Pantothenate kinase.